An 81-amino-acid chain; its full sequence is Large ribosomal subunit protein bL31B (81 aa).

It belongs to the bacterial ribosomal protein bL31 family. Type B subfamily. As to quaternary structure, part of the 50S ribosomal subunit.

This is Large ribosomal subunit protein bL31B from Exiguobacterium sibiricum (strain DSM 17290 / CCUG 55495 / CIP 109462 / JCM 13490 / 255-15).